The primary structure comprises 240 residues: Uridylate kinase (240 aa).

ATP is bound at residue 13–16; that stretch reads KASG. Positions 21-26 are involved in allosteric activation by GTP; that stretch reads GSQGFG. Gly55 provides a ligand contact to UMP. Positions 56 and 60 each coordinate ATP. UMP-binding positions include Asp75 and 136–143; that span reads TGNPFFTT. Positions 163, 164, 169, and 172 each coordinate ATP.

Belongs to the UMP kinase family. As to quaternary structure, homohexamer.

The protein localises to the cytoplasm. The catalysed reaction is UMP + ATP = UDP + ADP. It functions in the pathway pyrimidine metabolism; CTP biosynthesis via de novo pathway; UDP from UMP (UMPK route): step 1/1. Allosterically activated by GTP. Inhibited by UTP. Catalyzes the reversible phosphorylation of UMP to UDP. This is Uridylate kinase from Brucella abortus biovar 1 (strain 9-941).